The primary structure comprises 238 residues: Purine nucleoside phosphorylase DeoD-type (238 aa).

His4 lines the a purine D-ribonucleoside pocket. Phosphate is bound by residues Gly20, Arg24, Arg43, and Arg87–Ser90. A purine D-ribonucleoside-binding positions include Glu179–Glu181 and Ser203–Asp204. Asp204 acts as the Proton donor in catalysis.

The protein belongs to the PNP/UDP phosphorylase family. As to quaternary structure, homohexamer; trimer of homodimers.

The enzyme catalyses a purine D-ribonucleoside + phosphate = a purine nucleobase + alpha-D-ribose 1-phosphate. It catalyses the reaction a purine 2'-deoxy-D-ribonucleoside + phosphate = a purine nucleobase + 2-deoxy-alpha-D-ribose 1-phosphate. Catalyzes the reversible phosphorolytic breakdown of the N-glycosidic bond in the beta-(deoxy)ribonucleoside molecules, with the formation of the corresponding free purine bases and pentose-1-phosphate. This is Purine nucleoside phosphorylase DeoD-type from Actinobacillus succinogenes (strain ATCC 55618 / DSM 22257 / CCUG 43843 / 130Z).